The primary structure comprises 607 residues: Elongation factor 4 (607 aa).

The region spanning 11 to 193 (SKIRNFSIIA…QIVEKVPAPT (183 aa)) is the tr-type G domain. GTP contacts are provided by residues 23–28 (DHGKST) and 140–143 (NKID).

It belongs to the TRAFAC class translation factor GTPase superfamily. Classic translation factor GTPase family. LepA subfamily.

The protein resides in the cell membrane. The catalysed reaction is GTP + H2O = GDP + phosphate + H(+). In terms of biological role, required for accurate and efficient protein synthesis under certain stress conditions. May act as a fidelity factor of the translation reaction, by catalyzing a one-codon backward translocation of tRNAs on improperly translocated ribosomes. Back-translocation proceeds from a post-translocation (POST) complex to a pre-translocation (PRE) complex, thus giving elongation factor G a second chance to translocate the tRNAs correctly. Binds to ribosomes in a GTP-dependent manner. This Bacillus cereus (strain ZK / E33L) protein is Elongation factor 4.